Here is a 156-residue protein sequence, read N- to C-terminus: Probable succinate transporter subunit YjjB (156 aa).

4 helical membrane passes run 7-27, 54-74, 86-106, and 128-148; these read WALLQDMVLAAIPALGFAMVF, FGMDIEPASLLASIMIGMIGI, VFTVAAVIPMFPGISAYTAMI, and FLKASFIVGSLSIGLSLPGLW.

The protein belongs to the ThrE exporter (TC 2.A.79) family. The transporter is composed of YjjB and YjjP.

It localises to the cell inner membrane. Functionally, involved in succinate export with YjjP. Both proteins are required for export. The protein is Probable succinate transporter subunit YjjB of Yersinia enterocolitica serotype O:8 / biotype 1B (strain NCTC 13174 / 8081).